A 769-amino-acid polypeptide reads, in one-letter code: Intron Large complex component GCFC2 (769 aa).

2 disordered regions span residues 1–122 and 134–212; these read MALR…PIVE and RKRE…DENQ. A phosphoserine mark is found at Ser16, Ser17, Ser19, and Ser85. A Phosphothreonine modification is found at Thr86. 2 positions are modified to phosphoserine: Ser118 and Ser169. Basic and acidic residues predominate over residues 190 to 201; the sequence is RMAEETSIRSEE. Acidic residues predominate over residues 202–212; sequence SSEESQEDENQ. 2 positions are modified to phosphoserine: Ser203 and Ser206. Residues 256–308 adopt a coiled-coil conformation; the sequence is NLEIIKKQLNNRLTLLQESHRSHQREYEKYEQDIKSSKTAIQNLESASDHAQN.

It belongs to the GCF family. In terms of assembly, found in the Intron Large (IL) complex, a post-mRNA release spliceosomal complex containing the excised intron, U2, U5 and U6 snRNPs, and splicing factors. Interacts with TFIP11 and DHX15.

Its subcellular location is the nucleus. The protein resides in the nucleoplasm. The protein localises to the nucleolus. In terms of biological role, involved in pre-mRNA splicing through regulating spliceosome C complex formation. May play a role during late-stage splicing events and turnover of excised introns. The protein is Intron Large complex component GCFC2 (Gcfc2) of Mus musculus (Mouse).